The following is a 382-amino-acid chain: MAPTMIATLSSPVGLAQADFQLAGPMKDRRIVVAMSGGVDSSVVAALAARSGAEVIGVTLQLYDHGAKAKRVGACCAGQDIRDARAVADRLGFVHHVHDHESRFRDTVIDQFADEYLAGRTPIPCVRCNMGVKFTDLFQLARELGADCLATGHYVRRVMGPDGAEMHRAVDPARDQSYFLFATTQEQLDFLRFPLGGLEKNVVREIARDLGLGVAGKPDSQDICFVPDGDYASLVRKLRPEAEDQGDIVHVDGTVLGAHKGLIHYTVGQRRGIDIGGQAEPLYVVRLNAATKQVIVGPRRALAVSGARLGDANWLADVEGRDVLAKVRSMAKPVPARVTANRLRFLSPEYGVAPGQAAVLYDAADKSRVLGGGWIEETFTAE.

ATP contacts are provided by residues 34–41 (AMSGGVDS) and leucine 60. Cysteine 128 acts as the Nucleophile in catalysis. Cysteine 128 and cysteine 224 are oxidised to a cystine. ATP is bound at residue glycine 152. Residues 174–176 (RDQ) are interaction with tRNA. Cysteine 224 functions as the Cysteine persulfide intermediate in the catalytic mechanism.

Belongs to the MnmA/TRMU family.

It localises to the cytoplasm. The enzyme catalyses S-sulfanyl-L-cysteinyl-[protein] + uridine(34) in tRNA + AH2 + ATP = 2-thiouridine(34) in tRNA + L-cysteinyl-[protein] + A + AMP + diphosphate + H(+). Its function is as follows. Catalyzes the 2-thiolation of uridine at the wobble position (U34) of tRNA, leading to the formation of s(2)U34. The polypeptide is tRNA-specific 2-thiouridylase MnmA (Sphingopyxis alaskensis (strain DSM 13593 / LMG 18877 / RB2256) (Sphingomonas alaskensis)).